An 833-amino-acid chain; its full sequence is Protein translocase subunit SecA (833 aa).

ATP-binding positions include Gln87, 105 to 109 (GEGKT), and Asp494. A disordered region spans residues 789-816 (PAAVAYSGGEAEAGPAQPHREDPKVGRN). Over residues 806–815 (PHREDPKVGR) the composition is skewed to basic and acidic residues. Zn(2+) contacts are provided by Cys819, Cys821, Cys830, and Cys831.

This sequence belongs to the SecA family. In terms of assembly, monomer and homodimer. Part of the essential Sec protein translocation apparatus which comprises SecA, SecYEG and auxiliary proteins SecDF-YajC and YidC. Zn(2+) serves as cofactor.

The protein localises to the cell inner membrane. It is found in the cytoplasm. The catalysed reaction is ATP + H2O + cellular proteinSide 1 = ADP + phosphate + cellular proteinSide 2.. Its function is as follows. Part of the Sec protein translocase complex. Interacts with the SecYEG preprotein conducting channel. Has a central role in coupling the hydrolysis of ATP to the transfer of proteins into and across the cell membrane, serving as an ATP-driven molecular motor driving the stepwise translocation of polypeptide chains across the membrane. This is Protein translocase subunit SecA from Nitratidesulfovibrio vulgaris (strain DP4) (Desulfovibrio vulgaris).